Consider the following 341-residue polypeptide: MTEQQPVAVLGGGSFGTAVANLLAENGVPVRQWMRDPAQAEAMRVNRENPRYLKGIRLHDGVEPVNDLLATLQASELVFVALPSSALRSVLAPHAELLRGKGLVSLTKGIEAQSFKLMSQILEEIAPQARIGVLSGPNLSREIAEHALTATVVASEDEKLCQQVQAVLHGRTFRVYASADRFGVELGGALKNVYAIIAGMAVALGMGENTKSMLITRALAEMTRFAVSQGANPMTFLGLAGVGDLIVTCSSPKSRNYQVGYALGEGHSLEEAVNRLGEVAEGVNTLKVLKAKAQEVQVYMPLVAGLHAILFEGRTLNQVIEHLMRAEPKTDVDFISISGFN.

NADPH is bound by residues serine 14, phenylalanine 15, arginine 35, and lysine 108. Lysine 108 and glycine 136 together coordinate sn-glycerol 3-phosphate. Residue serine 140 coordinates NADPH. Lysine 191, aspartate 244, serine 254, arginine 255, and asparagine 256 together coordinate sn-glycerol 3-phosphate. Lysine 191 functions as the Proton acceptor in the catalytic mechanism. An NADPH-binding site is contributed by arginine 255. NADPH contacts are provided by valine 279 and glutamate 281.

The protein belongs to the NAD-dependent glycerol-3-phosphate dehydrogenase family.

The protein localises to the cytoplasm. It carries out the reaction sn-glycerol 3-phosphate + NAD(+) = dihydroxyacetone phosphate + NADH + H(+). The catalysed reaction is sn-glycerol 3-phosphate + NADP(+) = dihydroxyacetone phosphate + NADPH + H(+). The protein operates within membrane lipid metabolism; glycerophospholipid metabolism. In terms of biological role, catalyzes the reduction of the glycolytic intermediate dihydroxyacetone phosphate (DHAP) to sn-glycerol 3-phosphate (G3P), the key precursor for phospholipid synthesis. The polypeptide is Glycerol-3-phosphate dehydrogenase [NAD(P)+] (Pseudomonas putida (strain GB-1)).